A 453-amino-acid chain; its full sequence is MQEWLEILLIHTLIDSSSLSPQRLRVMNRIISSQGSDLIKQKLSQHTSFFGIKLWILITASASIAFLLVLIISVLLCFIFHRRRCSQEPFRLRSKLCLPLSHIPLTNKQQIPYNRCGDDIESQRISQVGWSSARLSYYTRSFSSTGSFGSFNVFTFMEIKNVTDSFADDNVITKGDSSTVYRGILMGTVTVAVKRFLPSNSRYEDKDFITKAEMIANVRHKNVVRLLGYCIEGDERVLVYEYAEKGDLHEWLHGSAGRNRPLTWRKRMKIIQGVAKGLAYIHEDIEPKITHQDIRPSKILLDYQWNPKILDVGFIGHSDIPTLIPSPGNMDEKIDVYSFGNMIMELVSGRVSVDQSSPHVRVYLVDWIKEMVANHMIVDVLDPSLPEFPTIKELKRIVLISLRCVDPELKERPKMGDVIHMLQPHDLLLNNNAIQKAQKITRSHEVSAISIRQ.

A helical membrane pass occupies residues 60–80 (ASASIAFLLVLIISVLLCFIF). At Thr155 the chain carries Phosphothreonine. Residues 166-428 (FADDNVITKG…IHMLQPHDLL (263 aa)) form the Protein kinase domain. ATP is bound by residues 172 to 180 (ITKGDSSTV) and Lys194. Tyr240 is modified (phosphotyrosine). Asp293 serves as the catalytic Proton acceptor. Phosphoserine is present on Ser297. Phosphothreonine is present on Thr322.

This sequence belongs to the protein kinase superfamily.

The protein localises to the cell membrane. It carries out the reaction L-seryl-[protein] + ATP = O-phospho-L-seryl-[protein] + ADP + H(+). It catalyses the reaction L-threonyl-[protein] + ATP = O-phospho-L-threonyl-[protein] + ADP + H(+). This chain is Putative receptor-like protein kinase At2g30940, found in Arabidopsis thaliana (Mouse-ear cress).